The following is a 285-amino-acid chain: Acetyl-coenzyme A carboxylase carboxyl transferase subunit beta (285 aa).

Residues 23–285 (VFRRCDGCSH…HLTAGRRARR (263 aa)) enclose the CoA carboxyltransferase N-terminal domain. The Zn(2+) site is built by Cys-27, Cys-30, Cys-46, and Cys-49. The C4-type zinc-finger motif lies at 27–49 (CDGCSHTHDAAELARTFEVCSQC).

The protein belongs to the AccD/PCCB family. As to quaternary structure, acetyl-CoA carboxylase is a heterohexamer composed of biotin carboxyl carrier protein (AccB), biotin carboxylase (AccC) and two subunits each of ACCase subunit alpha (AccA) and ACCase subunit beta (AccD). Zn(2+) serves as cofactor.

Its subcellular location is the cytoplasm. The enzyme catalyses N(6)-carboxybiotinyl-L-lysyl-[protein] + acetyl-CoA = N(6)-biotinyl-L-lysyl-[protein] + malonyl-CoA. It functions in the pathway lipid metabolism; malonyl-CoA biosynthesis; malonyl-CoA from acetyl-CoA: step 1/1. In terms of biological role, component of the acetyl coenzyme A carboxylase (ACC) complex. Biotin carboxylase (BC) catalyzes the carboxylation of biotin on its carrier protein (BCCP) and then the CO(2) group is transferred by the transcarboxylase to acetyl-CoA to form malonyl-CoA. The polypeptide is Acetyl-coenzyme A carboxylase carboxyl transferase subunit beta (Sorangium cellulosum (strain So ce56) (Polyangium cellulosum (strain So ce56))).